Here is a 112-residue protein sequence, read N- to C-terminus: Large ribosomal subunit protein uL22 (112 aa).

It belongs to the universal ribosomal protein uL22 family. As to quaternary structure, part of the 50S ribosomal subunit.

This protein binds specifically to 23S rRNA; its binding is stimulated by other ribosomal proteins, e.g. L4, L17, and L20. It is important during the early stages of 50S assembly. It makes multiple contacts with different domains of the 23S rRNA in the assembled 50S subunit and ribosome. Its function is as follows. The globular domain of the protein is located near the polypeptide exit tunnel on the outside of the subunit, while an extended beta-hairpin is found that lines the wall of the exit tunnel in the center of the 70S ribosome. This chain is Large ribosomal subunit protein uL22, found in Lawsonia intracellularis (strain PHE/MN1-00).